The chain runs to 142 residues: Large ribosomal subunit protein uL13 (142 aa).

It belongs to the universal ribosomal protein uL13 family. As to quaternary structure, part of the 50S ribosomal subunit.

This protein is one of the early assembly proteins of the 50S ribosomal subunit, although it is not seen to bind rRNA by itself. It is important during the early stages of 50S assembly. This Shewanella baltica (strain OS185) protein is Large ribosomal subunit protein uL13.